A 295-amino-acid polypeptide reads, in one-letter code: MRRLEGSMVAIVTPMKDGAVDLRALRELAEWQLAEGTDGIVPCGTTGEGVTLTPAERADVIRTVIETVRGRALVIAGAGSNATHEAIESVKLAKTLGADAALVVTPYYNKPTQEGLFRHYQAIWEATRFPVVAYNVPSRTSVDLLPETVARLAKAGAIAGIKEATANMDRQVQLVEKVGKDAIAYLSGDDFTVLPYVACGGHGVISVIANIAPRAMKELVVAARSGDLAGALAKQAAMAELNRMMFVETNPGPVKAAVALLGRSGGELRLPLAPVSEASLAKVRDAMVRFGLKLA.

T46 lines the pyruvate pocket. The active-site Proton donor/acceptor is Y134. Catalysis depends on K162, which acts as the Schiff-base intermediate with substrate. I205 contacts pyruvate.

It belongs to the DapA family. Homotetramer; dimer of dimers.

It localises to the cytoplasm. The catalysed reaction is L-aspartate 4-semialdehyde + pyruvate = (2S,4S)-4-hydroxy-2,3,4,5-tetrahydrodipicolinate + H2O + H(+). The protein operates within amino-acid biosynthesis; L-lysine biosynthesis via DAP pathway; (S)-tetrahydrodipicolinate from L-aspartate: step 3/4. Catalyzes the condensation of (S)-aspartate-beta-semialdehyde [(S)-ASA] and pyruvate to 4-hydroxy-tetrahydrodipicolinate (HTPA). The polypeptide is 4-hydroxy-tetrahydrodipicolinate synthase (Anaeromyxobacter sp. (strain K)).